Reading from the N-terminus, the 346-residue chain is Sesquiterpene synthase Agr1 (346 aa).

Residues D98, N234, S238, and E242 each contribute to the Mg(2+) site. The DDXXD motif motif lies at 98-102 (DNLSD). The (2E,6E)-farnesyl diphosphate site is built by R322 and Y323.

It belongs to the terpene synthase family. Requires Mg(2+) as cofactor.

The enzyme catalyses (2E,6E)-farnesyl diphosphate = delta-cadinene + diphosphate. It catalyses the reaction (2E,6E)-farnesyl diphosphate = alpha-muurolene + diphosphate. The catalysed reaction is (2E,6E)-farnesyl diphosphate = gamma-muurolene + diphosphate. It carries out the reaction (2E,6E)-farnesyl diphosphate = alpha-selinene + diphosphate. Its function is as follows. Terpene cyclase that catalyzes the cyclization of farnesyl diphosphate (FPP) to various sesquiterpenes, including alpha-muurolene, gamma-muurolene, alpha-selinene, beta-selinene, delta-cadinene, alpha-cadinol and delta-cadinol. Delta-cadinene is the major product of Agr1. This Cyclocybe aegerita (Black poplar mushroom) protein is Sesquiterpene synthase Agr1.